The primary structure comprises 128 residues: Adrenodoxin homolog (128 aa).

Positions 12–115 (EQIRIFFKTM…NAVFTVPRAT (104 aa)) constitute a 2Fe-2S ferredoxin-type domain. [2Fe-2S] cluster contacts are provided by Cys-50, Cys-56, Cys-59, and Cys-96.

Belongs to the adrenodoxin/putidaredoxin family. It depends on [2Fe-2S] cluster as a cofactor.

The protein resides in the mitosome. Its function is as follows. Ferredoxins are iron-sulfur proteins that transfer electrons in a wide variety of metabolic reactions. The protein is Adrenodoxin homolog of Encephalitozoon cuniculi (strain GB-M1) (Microsporidian parasite).